The chain runs to 233 residues: 2,3-bisphosphoglycerate-dependent phosphoglycerate mutase (233 aa).

Substrate is bound by residues 8–15, 21–22, Arg-60, 87–90, Lys-98, 114–115, and 183–184; these read RHGESEWN, TG, ERHY, RR, and GN. Catalysis depends on His-9, which acts as the Tele-phosphohistidine intermediate. The active-site Proton donor/acceptor is Glu-87.

Belongs to the phosphoglycerate mutase family. BPG-dependent PGAM subfamily.

It carries out the reaction (2R)-2-phosphoglycerate = (2R)-3-phosphoglycerate. It functions in the pathway carbohydrate degradation; glycolysis; pyruvate from D-glyceraldehyde 3-phosphate: step 3/5. Its function is as follows. Catalyzes the interconversion of 2-phosphoglycerate and 3-phosphoglycerate. The sequence is that of 2,3-bisphosphoglycerate-dependent phosphoglycerate mutase from Lactococcus lactis subsp. cremoris (strain MG1363).